The sequence spans 155 residues: uncharacterized protein (155 aa).

The segment at 56–79 is disordered; sequence GEKRPTHRRPYRRTKPYPKRPSML. Residues 60–73 are compositionally biased toward basic residues; it reads PTHRRPYRRTKPYP.

This is an uncharacterized protein from Sinorhizobium fredii (strain NBRC 101917 / NGR234).